The sequence spans 246 residues: MSQVNMRDMLKAGVHFGHQTRYWNPKMGKFIFGARNKIHIINLEKTLPMFNEALTFVERLAAGKNKILFVGTKRSAGKIVREEAARCGMPYVDHRWLGGMLTNYKTIRQSIKRLRDLETQSQDGTFDKLTKKEALMRSRDLEKLERSLGGIKDMGGLPDALFVIDVDHERIAITEANKLGIPVIGVVDTNSSPEGVDYVIPGNDDAIRAVQLYLNSMAEAVIRGKQGAATSADEFVEEAPAESAEG.

Belongs to the universal ribosomal protein uS2 family.

The sequence is that of Small ribosomal subunit protein uS2 from Pseudomonas aeruginosa (strain LESB58).